The sequence spans 341 residues: uncharacterized protein (341 aa).

Residues 315 to 337 form a helical membrane-spanning segment; the sequence is VAAWFSGIAGGTFLALKLVSLMM.

The protein resides in the cell membrane. This is an uncharacterized protein from Bacillus subtilis (strain 168).